The primary structure comprises 290 residues: Purine nucleoside phosphorylase (290 aa).

68 to 69 serves as a coordination point for phosphate; sequence RN. Residue M204 participates in substrate binding. T205 contributes to the phosphate binding site.

It belongs to the PNP/MTAP phosphorylase family. MTAP subfamily. As to quaternary structure, homotrimer.

It is found in the cytoplasm. Its subcellular location is the nucleus. It carries out the reaction a purine D-ribonucleoside + phosphate = a purine nucleobase + alpha-D-ribose 1-phosphate. It participates in purine metabolism; purine nucleoside salvage. In terms of biological role, purine nucleoside phosphorylase involved in purine salvage. This chain is Purine nucleoside phosphorylase, found in Drosophila melanogaster (Fruit fly).